The sequence spans 721 residues: Polyribonucleotide nucleotidyltransferase (721 aa).

Mg(2+) is bound by residues aspartate 495 and aspartate 501. In terms of domain architecture, KH spans 562-621 (PRLLSFRIDPELIGTVIGPGGRTIKGITERTNTKIDIEDGGIVTIASHDGAAAEEAQKII). The S1 motif domain maps to 631–699 (GEIFPGVVTR…SRGRINLTLR (69 aa)). A disordered region spans residues 702–721 (GQNGGMSYPEPTPTPVAPLS). Residues 711-721 (EPTPTPVAPLS) are compositionally biased toward pro residues.

Belongs to the polyribonucleotide nucleotidyltransferase family. Mg(2+) serves as cofactor.

It is found in the cytoplasm. It carries out the reaction RNA(n+1) + phosphate = RNA(n) + a ribonucleoside 5'-diphosphate. In terms of biological role, involved in mRNA degradation. Catalyzes the phosphorolysis of single-stranded polyribonucleotides processively in the 3'- to 5'-direction. This Prochlorococcus marinus (strain MIT 9301) protein is Polyribonucleotide nucleotidyltransferase.